A 552-amino-acid chain; its full sequence is Keratin, type II cytoskeletal 6A (552 aa).

Residues 1–14 are compositionally biased toward polar residues; the sequence is MSTKTVIRSQTSHR. A disordered region spans residues 1-21; sequence MSTKTVIRSQTSHRGFSAGSA. Residues 1 to 151 are head; sequence MSTKTVIRSQ…DPTIQRVRTE (151 aa). The segment at 152 to 187 is coil 1A; sequence EREQIKTLNNKFASFIDKVRFLEQQNKVLDTKWALL. The 314-residue stretch at 152–465 folds into the IF rod domain; the sequence is EREQIKTLNN…TLLEGEECRL (314 aa). A linker 1 region spans residues 188-206; sequence QEQGTKTVRQGLETLFEQY. A coil 1B region spans residues 207–298; that stretch reads INDLRKELDN…ALYEAELSQM (92 aa). A linker 12 region spans residues 299–322; that stretch reads QTHISDTSVVLSMDNNRSLDLDSI. The segment at 323–461 is coil 2; sequence IAEVKAQYEE…ATYRTLLEGE (139 aa). A tail region spans residues 462-552; the sequence is ECRLNGEGVG…TSSTRKSYRP (91 aa). Positions 524-552 are disordered; sequence ISSGLSSSGGSSSTIKYTTTSSTRKSYRP. A compositionally biased stretch (low complexity) spans 525–552; that stretch reads SSGLSSSGGSSSTIKYTTTSSTRKSYRP.

The protein belongs to the intermediate filament family. As to quaternary structure, heterodimer of a type I and a type II keratin. KRT6 isomers associate with KRT16 and/or KRT17. Interacts with TCHP.

In terms of biological role, epidermis-specific type I keratin involved in wound healing. Involved in the activation of follicular keratinocytes after wounding, while it does not play a major role in keratinocyte proliferation or migration. Participates in the regulation of epithelial migration by inhibiting the activity of SRC during wound repair. In Rattus norvegicus (Rat), this protein is Keratin, type II cytoskeletal 6A (Krt6a).